Reading from the N-terminus, the 175-residue chain is B9 domain-containing protein 2 (175 aa).

The 117-residue stretch at Ala2–Ser118 folds into the C2 B9-type domain.

Belongs to the B9D family. Part of the tectonic-like complex (also named B9 complex).

Its subcellular location is the cytoplasm. It is found in the cytoskeleton. It localises to the cilium basal body. The protein resides in the cilium axoneme. Its function is as follows. Component of the tectonic-like complex, a complex localized at the transition zone of primary cilia and acting as a barrier that prevents diffusion of transmembrane proteins between the cilia and plasma membranes. This Danio rerio (Zebrafish) protein is B9 domain-containing protein 2 (b9d2).